The following is a 450-amino-acid chain: MSAIQASWPSGTECIAKYNFHGTAEQDLPFCKGDVLTIVAVTKDPNWYKAKNKVGREGIIPANYVQKREGVKAGTKLSLMPWFHGKITREQAERLLYPPETGLFLVRESTNYPGDYTLCVSCEGKVEHYRIMYHASKLSIDEEVYFENLMQLVEHYTTDADGLCTRLIKPKVMEGTVAAQDEFYRSGWALNMKELKLLQTIGKGEFGDVMLGDYRGNKVAVKCIKNDATAQAFLAEASVMTQLRHSNLVQLLGVIVEEKGGLYIVTEYMAKGSLVDYLRSRGRSVLGGDCLLKFSLDVCEAMEYLEGNNFVHRDLAARNVLVSEDNVAKVSDFGLTKEASSTQDTGKLPVKWTAPEALREKKFSTKSDVWSFGILLWEIYSFGRVPYPRIPLKDVVPRVEKGYKMDAPDGCPPAVYDVMKNCWHLDAATRPTFLQLREQLEHIRTHELHL.

An N-acetylserine modification is found at Ser-2. The 62-residue stretch at 9–70 folds into the SH3 domain; the sequence is PSGTECIAKY…PANYVQKREG (62 aa). Residues 9–70 form an interaction with PTPN22 region; that stretch reads PSGTECIAKY…PANYVQKREG (62 aa). Positions 82–171 constitute an SH2 domain; sequence WFHGKITREQ…GLCTRLIKPK (90 aa). A Phosphotyrosine modification is found at Tyr-184. The Protein kinase domain maps to 195 to 445; sequence LKLLQTIGKG…LREQLEHIRT (251 aa). ATP is bound by residues 201–209 and Lys-222; that span reads IGKGEFGDV. Phosphotyrosine is present on Tyr-304. The active-site Proton acceptor is the Asp-314. Ser-364 bears the Phosphoserine; by PKA mark. A Phosphotyrosine; by autocatalysis modification is found at Tyr-416.

It belongs to the protein kinase superfamily. Tyr protein kinase family. CSK subfamily. Homodimer (via SH3-domain). Interacts with PTPN22. Interacts with phosphorylated SIT1, PAG1, LIME1 and TGFB1I1; these interactions serve to recruit CSK to the membrane where it can phosphorylate and inhibit Src-family kinases. Interacts with SRCIN1. Interacts with RHOH. Interacts (via SH2 domain) with SCIMP; this interaction is dependent on phosphorylation of SCIMP 'Tyr-96'. Interacts (via SH2 domain) with PRAG1 (when phosphorylated at 'Tyr-391'); this interaction prevents translocation of CSK from the cytoplasm to the membrane leading to increased activity of CSK. Interacts with LRRK1. Mn(2+) serves as cofactor. Mg(2+) is required as a cofactor. Post-translationally, phosphorylated at Ser-364 by PKA, leading to increased activity. Autophosphorylated. In terms of tissue distribution, enriched in lymphoid tissues.

It localises to the cytoplasm. It is found in the cell membrane. It carries out the reaction L-tyrosyl-[protein] + ATP = O-phospho-L-tyrosyl-[protein] + ADP + H(+). Functionally, non-receptor tyrosine-protein kinase that plays an important role in the regulation of cell growth, differentiation, migration and immune response. Phosphorylates tyrosine residues located in the C-terminal tails of Src-family kinases (SFKs) including LCK, SRC, HCK, FYN, LYN, CSK or YES1. Upon tail phosphorylation, Src-family members engage in intramolecular interactions between the phosphotyrosine tail and the SH2 domain that result in an inactive conformation. To inhibit SFKs, CSK is recruited to the plasma membrane via binding to transmembrane proteins or adapter proteins located near the plasma membrane. Suppresses signaling by various surface receptors, including T-cell receptor (TCR) and B-cell receptor (BCR) by phosphorylating and maintaining inactive several positive effectors such as FYN or LCK. This chain is Tyrosine-protein kinase CSK (Csk), found in Rattus norvegicus (Rat).